A 628-amino-acid polypeptide reads, in one-letter code: Chaperone protein DnaK (628 aa).

Residue Thr197 is modified to Phosphothreonine; by autocatalysis. Residues 595–604 (AEAMYKKEQG) are compositionally biased toward basic and acidic residues. The segment at 595–628 (AEAMYKKEQGEQAGAQPNQKAKKDDDDVIDAEVE) is disordered.

It belongs to the heat shock protein 70 family.

Its function is as follows. Acts as a chaperone. This Aliarcobacter butzleri (strain RM4018) (Arcobacter butzleri) protein is Chaperone protein DnaK.